A 146-amino-acid chain; its full sequence is Ribonuclease H (146 aa).

The region spanning Glu4 to Val145 is the RNase H type-1 domain. Mg(2+) contacts are provided by Asp13, Glu51, Asp73, and Asp137.

This sequence belongs to the RNase H family. As to quaternary structure, monomer. It depends on Mg(2+) as a cofactor.

The protein resides in the cytoplasm. It carries out the reaction Endonucleolytic cleavage to 5'-phosphomonoester.. Endonuclease that specifically degrades the RNA of RNA-DNA hybrids. The sequence is that of Ribonuclease H from Ehrlichia ruminantium (strain Gardel).